Here is a 142-residue protein sequence, read N- to C-terminus: Large ribosomal subunit protein uL11 (142 aa).

The protein belongs to the universal ribosomal protein uL11 family. In terms of assembly, part of the ribosomal stalk of the 50S ribosomal subunit. Interacts with L10 and the large rRNA to form the base of the stalk. L10 forms an elongated spine to which L12 dimers bind in a sequential fashion forming a multimeric L10(L12)X complex. In terms of processing, one or more lysine residues are methylated.

In terms of biological role, forms part of the ribosomal stalk which helps the ribosome interact with GTP-bound translation factors. This Glaesserella parasuis serovar 5 (strain SH0165) (Haemophilus parasuis) protein is Large ribosomal subunit protein uL11.